The following is a 173-amino-acid chain: Translation initiation factor IF-3 (173 aa).

Belongs to the IF-3 family. In terms of assembly, monomer.

Its subcellular location is the cytoplasm. IF-3 binds to the 30S ribosomal subunit and shifts the equilibrium between 70S ribosomes and their 50S and 30S subunits in favor of the free subunits, thus enhancing the availability of 30S subunits on which protein synthesis initiation begins. In Clostridium tetani (strain Massachusetts / E88), this protein is Translation initiation factor IF-3.